Consider the following 371-residue polypeptide: Histidinol-phosphate aminotransferase (371 aa).

At Lys-228 the chain carries N6-(pyridoxal phosphate)lysine.

It belongs to the class-II pyridoxal-phosphate-dependent aminotransferase family. Histidinol-phosphate aminotransferase subfamily. It depends on pyridoxal 5'-phosphate as a cofactor.

The catalysed reaction is L-histidinol phosphate + 2-oxoglutarate = 3-(imidazol-4-yl)-2-oxopropyl phosphate + L-glutamate. Its pathway is amino-acid biosynthesis; L-histidine biosynthesis; L-histidine from 5-phospho-alpha-D-ribose 1-diphosphate: step 7/9. The sequence is that of Histidinol-phosphate aminotransferase from Methanococcus maripaludis (strain C6 / ATCC BAA-1332).